The sequence spans 563 residues: Probable Xaa-Pro aminopeptidase PEPP (563 aa).

The Mn(2+) site is built by Asp331, Asp342, Glu491, and Glu532.

This sequence belongs to the peptidase M24B family. It depends on Mn(2+) as a cofactor.

The enzyme catalyses Release of any N-terminal amino acid, including proline, that is linked to proline, even from a dipeptide or tripeptide.. In terms of biological role, catalyzes the removal of a penultimate prolyl residue from the N-termini of peptides. The sequence is that of Probable Xaa-Pro aminopeptidase PEPP (PEPP) from Verticillium alfalfae (strain VaMs.102 / ATCC MYA-4576 / FGSC 10136) (Verticillium wilt of alfalfa).